The following is a 133-amino-acid chain: C-C motif chemokine 21b (133 aa).

A signal peptide spans 1–23 (MAQMMTLSLLSLVLALCIPWTQG). Intrachain disulfides connect Cys31/Cys57, Cys32/Cys75, and Cys103/Cys122. Residues 87-133 (MRRLDQPPAPGKQSPGCRKNRGTSKSGKKGKGSKGCKRTEQTQPSRG) form a disordered region. The C-terminal basic extension stretch occupies residues 98–133 (KQSPGCRKNRGTSKSGKKGKGSKGCKRTEQTQPSRG). Residues 104–122 (RKNRGTSKSGKKGKGSKGC) show a composition bias toward basic residues.

This sequence belongs to the intercrine beta (chemokine CC) family. Binds to CCR7 and to CXCR3. Interacts with PDPN; relocalizes PDPN to the basolateral membrane. Interacts with GPR174. Expressed strongly in lung, spleen, thymus, peripheral and mesentric lymph nodes. Also expressed in the testis, kidney, liver, and heart.

It is found in the secreted. In terms of biological role, inhibits hemopoiesis and stimulates chemotaxis. Chemotactic in vitro for thymocytes and activated T-cells, but not for B-cells, macrophages, or neutrophils. Potent mesangial cell chemoattractant. Shows preferential activity towards naive T-cells. May play a role in mediating homing of lymphocytes to secondary lymphoid organs. This is C-C motif chemokine 21b (Ccl21b) from Mus musculus (Mouse).